The primary structure comprises 691 residues: Penicillin-binding protein 2D (691 aa).

The Cytoplasmic segment spans residues 1–19 (MDAMTNKRLRLTLKTVRAF). The helical; Signal-anchor for type II membrane protein transmembrane segment at 20 to 40 (IFLGAFAALAAAAVFMTVILI) threads the bilayer. Residues 41-691 (AKYQGAPSVQ…WWDKWLGRHH (651 aa)) lie on the Extracellular side of the membrane. The transglycosylase stretch occupies residues 55–223 (TILYASDGSK…PSGYSPYVNE (169 aa)). Glu-94 acts as the Proton donor; for transglycosylase activity in catalysis. The interval 327-605 (VGFSAIDPRT…AKTIWADFME (279 aa)) is transpeptidase. Ser-365 acts as the Acyl-ester intermediate; for transpeptidase activity in catalysis. Residues 663–691 (AKQTKDRLPSKEKPASEKKWWDKWLGRHH) form a disordered region. A compositionally biased stretch (basic and acidic residues) spans 664 to 691 (KQTKDRLPSKEKPASEKKWWDKWLGRHH).

This sequence in the N-terminal section; belongs to the glycosyltransferase 51 family. It in the C-terminal section; belongs to the transpeptidase family.

Its subcellular location is the cell membrane. The enzyme catalyses [GlcNAc-(1-&gt;4)-Mur2Ac(oyl-L-Ala-gamma-D-Glu-L-Lys-D-Ala-D-Ala)](n)-di-trans,octa-cis-undecaprenyl diphosphate + beta-D-GlcNAc-(1-&gt;4)-Mur2Ac(oyl-L-Ala-gamma-D-Glu-L-Lys-D-Ala-D-Ala)-di-trans,octa-cis-undecaprenyl diphosphate = [GlcNAc-(1-&gt;4)-Mur2Ac(oyl-L-Ala-gamma-D-Glu-L-Lys-D-Ala-D-Ala)](n+1)-di-trans,octa-cis-undecaprenyl diphosphate + di-trans,octa-cis-undecaprenyl diphosphate + H(+). The catalysed reaction is Preferential cleavage: (Ac)2-L-Lys-D-Ala-|-D-Ala. Also transpeptidation of peptidyl-alanyl moieties that are N-acyl substituents of D-alanine.. It functions in the pathway cell wall biogenesis; peptidoglycan biosynthesis. Involved in the polymerization and cross-linking of spore peptidoglycan. May be required for synthesis of the spore germ cell wall, the first layer of peptidoglycan synthesized on the surface of the inner forespore membrane. This Bacillus subtilis (strain 168) protein is Penicillin-binding protein 2D (pbpG).